A 405-amino-acid polypeptide reads, in one-letter code: Probable tRNA sulfurtransferase (405 aa).

In terms of domain architecture, THUMP spans 75–183 (PRAAGAAADV…QNLAYVYLET (109 aa)). Residues 201 to 202 (LM), Lys285, Gly307, and Gln316 each bind ATP.

The protein belongs to the ThiI family.

Its subcellular location is the cytoplasm. The catalysed reaction is [ThiI sulfur-carrier protein]-S-sulfanyl-L-cysteine + a uridine in tRNA + 2 reduced [2Fe-2S]-[ferredoxin] + ATP + H(+) = [ThiI sulfur-carrier protein]-L-cysteine + a 4-thiouridine in tRNA + 2 oxidized [2Fe-2S]-[ferredoxin] + AMP + diphosphate. It catalyses the reaction [ThiS sulfur-carrier protein]-C-terminal Gly-Gly-AMP + S-sulfanyl-L-cysteinyl-[cysteine desulfurase] + AH2 = [ThiS sulfur-carrier protein]-C-terminal-Gly-aminoethanethioate + L-cysteinyl-[cysteine desulfurase] + A + AMP + 2 H(+). Its pathway is cofactor biosynthesis; thiamine diphosphate biosynthesis. Its function is as follows. Catalyzes the ATP-dependent transfer of a sulfur to tRNA to produce 4-thiouridine in position 8 of tRNAs, which functions as a near-UV photosensor. Also catalyzes the transfer of sulfur to the sulfur carrier protein ThiS, forming ThiS-thiocarboxylate. This is a step in the synthesis of thiazole, in the thiamine biosynthesis pathway. The sulfur is donated as persulfide by IscS. In Methanosarcina mazei (strain ATCC BAA-159 / DSM 3647 / Goe1 / Go1 / JCM 11833 / OCM 88) (Methanosarcina frisia), this protein is Probable tRNA sulfurtransferase.